Consider the following 283-residue polypeptide: Polyamine aminopropyltransferase (283 aa).

A PABS domain is found at 3–236; that stretch reads GIWFSELQTP…GLWAFSLGSK (234 aa). Position 32 (glutamine 32) interacts with S-methyl-5'-thioadenosine. Residues histidine 63 and aspartate 87 each coordinate spermidine. Residues glutamate 107 and 138 to 139 each bind S-methyl-5'-thioadenosine; that span reads DG. Aspartate 156 acts as the Proton acceptor in catalysis. A spermidine-binding site is contributed by 156–159; that stretch reads DSTD. Proline 163 contributes to the S-methyl-5'-thioadenosine binding site.

The protein belongs to the spermidine/spermine synthase family. Homodimer or homotetramer.

It localises to the cytoplasm. It catalyses the reaction S-adenosyl 3-(methylsulfanyl)propylamine + putrescine = S-methyl-5'-thioadenosine + spermidine + H(+). Its pathway is amine and polyamine biosynthesis; spermidine biosynthesis; spermidine from putrescine: step 1/1. Its function is as follows. Catalyzes the irreversible transfer of a propylamine group from the amino donor S-adenosylmethioninamine (decarboxy-AdoMet) to putrescine (1,4-diaminobutane) to yield spermidine. The sequence is that of Polyamine aminopropyltransferase from Moorella thermoacetica (strain ATCC 39073 / JCM 9320).